The primary structure comprises 138 residues: Putative nickel-responsive regulator (138 aa).

Positions 78, 89, 91, and 97 each coordinate Ni(2+).

Belongs to the transcriptional regulatory CopG/NikR family. Ni(2+) serves as cofactor.

In terms of biological role, transcriptional regulator. This chain is Putative nickel-responsive regulator, found in Desulfovibrio desulfuricans (strain ATCC 27774 / DSM 6949 / MB).